The sequence spans 132 residues: Small ribosomal subunit protein uS8 (132 aa).

This sequence belongs to the universal ribosomal protein uS8 family. In terms of assembly, part of the 30S ribosomal subunit. Contacts proteins S5 and S12.

Its function is as follows. One of the primary rRNA binding proteins, it binds directly to 16S rRNA central domain where it helps coordinate assembly of the platform of the 30S subunit. In Pediococcus pentosaceus (strain ATCC 25745 / CCUG 21536 / LMG 10740 / 183-1w), this protein is Small ribosomal subunit protein uS8.